The primary structure comprises 404 residues: Cysteine desulfurase IscS (404 aa).

Residues 75 to 76 (AT), Asn-155, Gln-183, and 203 to 205 (SGH) contribute to the pyridoxal 5'-phosphate site. N6-(pyridoxal phosphate)lysine is present on Lys-206. Thr-243 is a pyridoxal 5'-phosphate binding site. The active-site Cysteine persulfide intermediate is Cys-328. Cys-328 contributes to the [2Fe-2S] cluster binding site.

This sequence belongs to the class-V pyridoxal-phosphate-dependent aminotransferase family. NifS/IscS subfamily. Homodimer. Forms a heterotetramer with IscU, interacts with other sulfur acceptors. Pyridoxal 5'-phosphate is required as a cofactor.

It is found in the cytoplasm. It carries out the reaction (sulfur carrier)-H + L-cysteine = (sulfur carrier)-SH + L-alanine. The protein operates within cofactor biosynthesis; iron-sulfur cluster biosynthesis. Functionally, master enzyme that delivers sulfur to a number of partners involved in Fe-S cluster assembly, tRNA modification or cofactor biosynthesis. Catalyzes the removal of elemental sulfur atoms from cysteine to produce alanine. Functions as a sulfur delivery protein for Fe-S cluster synthesis onto IscU, an Fe-S scaffold assembly protein, as well as other S acceptor proteins. The chain is Cysteine desulfurase IscS from Klebsiella pneumoniae (strain 342).